Reading from the N-terminus, the 299-residue chain is Zinc finger protein 414 (299 aa).

Polar residues-rich tracts occupy residues 1–20 and 70–80; these read MEEL…SSSN and SCQTSSTTRGV. The segment at 1–102 is disordered; it reads MEELSGPSSD…PPPGKQIPCS (102 aa). 2 consecutive C2H2-type zinc fingers follow at residues 99-123 and 135-159; these read IPCS…LRTH and FRCS…GKLH. A C2H2-type 3; degenerate zinc finger spans residues 166 to 190; it reads FKCENCLLRFRTHRSLFKHLHVCID. 2 disordered regions span residues 193 to 228 and 254 to 299; these read QNPA…PFPL and PRLR…GACR. Positions 203-215 are enriched in basic and acidic residues; the sequence is LDKEPPVPERPPE. The span at 217–228 shows a compositional bias: low complexity; it reads DPSSSLGLPFPL. Polar residues predominate over residues 268-285; that stretch reads TSSTAIWKKSQGATSSPR.

This sequence belongs to the krueppel C2H2-type zinc-finger protein family.

The protein localises to the nucleus. Functionally, may be involved in transcriptional regulation. The sequence is that of Zinc finger protein 414 (Znf414) from Rattus norvegicus (Rat).